The chain runs to 750 residues: MIIRSPEPEVKILVDRDPIKTSFEEWAKPGHFSRTIAKGPDTTTWIWNLHADAHDFDSHTNDLEEISRKVFSAHFGQLSIIFLWLSGMYFHGARFSNYEAWLSDPTHIRPSAQVVWPIVGQEILNGDVGGGFRGIQITSGFFQIWRASGITSELQLYCTAIGALVFAALMLFAGWFHYHKAAPKLAWFQDVESMLNHHLTGLLGLGSLSWAGHQIHVSLPINQFLNAAVDPKEIPLPHEFILNRDLLAQLYPSFAEGATPFFTLNWSKYAEFLTFRGGLDPVTGGLWLTDIIHHHLAIAILFLIAGHMYRTNWGIGHSIKDILEAHKGPFTGQGHKGLYEILTTSWHAQLSINLAMLGSLTIVVAHHMYSMPPYPYLATDYGTQLSLFTHHMWIGGFLIVGAAAHAAIFMVRDYDPTIRYNDLLDRVLRHRDAIISHLNWVCIFLGFHSFGLYIHNDTMSALGRPQDMFSDTAIQLQPVFAQWIQNTHALAPGTTAPGATTSTSLTWGGDNLVAVGGKVALLPIPLGTADFLVHHIHAFTIHVTVLILLKGVLFARSSRLIPDKANLGFRFPCDGPGRGGTCQVSAWDHVFLGLFWMYNSISVVIFHFSWKMQSDVWGSISDQGIVNHITGGNFAQSSITINGWLRDFLWAQASQVIQSYGSSLSAYGLFFLGAHFVWAFSLMFLFSGRGYWQELIESIVWAHNKLKVAPATQPRALSIVQGRAVGVTHYLLGGIATTWAFFLARIIAVG.

Helical transmembrane passes span 70 to 93 (VFSA…FHGA), 156 to 179 (LYCT…FHYH), 195 to 219 (LNHH…HVSL), 291 to 309 (IIHH…GHMY), 346 to 369 (WHAQ…HHMY), 385 to 411 (LSLF…IFMV), 433 to 455 (AIIS…LYIH), and 531 to 549 (FLVH…LILL). Residues cysteine 573 and cysteine 582 each contribute to the [4Fe-4S] cluster site. Helical transmembrane passes span 589–610 (HVFL…HFSW) and 664–686 (LSAY…MFLF). Position 675 (histidine 675) interacts with chlorophyll a'. The chlorophyll a site is built by methionine 683 and tyrosine 691. Tryptophan 692 provides a ligand contact to phylloquinone. The helical transmembrane segment at 724–744 (AVGVTHYLLGGIATTWAFFLA) threads the bilayer.

It belongs to the PsaA/PsaB family. The PsaA/B heterodimer binds the P700 chlorophyll special pair and subsequent electron acceptors. PSI consists of a core antenna complex that captures photons, and an electron transfer chain that converts photonic excitation into a charge separation. The eukaryotic PSI reaction center is composed of at least 11 subunits. The cofactor is P700 is a chlorophyll a/chlorophyll a' dimer, A0 is one or more chlorophyll a, A1 is one or both phylloquinones and FX is a shared 4Fe-4S iron-sulfur center..

The protein resides in the plastid. The protein localises to the chloroplast thylakoid membrane. The catalysed reaction is reduced [plastocyanin] + hnu + oxidized [2Fe-2S]-[ferredoxin] = oxidized [plastocyanin] + reduced [2Fe-2S]-[ferredoxin]. Functionally, psaA and PsaB bind P700, the primary electron donor of photosystem I (PSI), as well as the electron acceptors A0, A1 and FX. PSI is a plastocyanin-ferredoxin oxidoreductase, converting photonic excitation into a charge separation, which transfers an electron from the donor P700 chlorophyll pair to the spectroscopically characterized acceptors A0, A1, FX, FA and FB in turn. Oxidized P700 is reduced on the lumenal side of the thylakoid membrane by plastocyanin. The chain is Photosystem I P700 chlorophyll a apoprotein A1 from Glycine max (Soybean).